Consider the following 359-residue polypeptide: Acyl-CoA desaturase (359 aa).

Residues 1–72 are Cytoplasmic-facing; it reads MPAHLLQEEI…EGPKPKLEYV (72 aa). A helical transmembrane segment spans residues 73–93; that stretch reads WRNIILMGLLHLGALYGITLI. Asn-75 contacts substrate. Over 94–97 the chain is Lumenal; the sequence is PTCK. A helical transmembrane segment spans residues 98-118; the sequence is IYTFLWVLFYYVISALGITAG. Topologically, residues 119-217 are cytoplasmic; sequence VHRLWSHRTY…EKLVMFQRRY (99 aa). Fe cation-binding residues include His-120 and His-125. The Histidine box-1 signature appears at 120–125; that stretch reads HRLWSH. Residues Asn-148, Arg-155, and Asp-156 each coordinate substrate. Residues His-157, His-160, and His-161 each contribute to the Fe cation site. The Histidine box-2 motif lies at 157-161; sequence HRAHH. Arg-188 and Lys-189 together coordinate substrate. The residue at position 203 (Ser-203) is a Phosphoserine. Residues 218–237 traverse the membrane as a helical segment; that stretch reads YKPGVLLLCFILPTLVPWYL. Residues 238–241 lie on the Lumenal side of the membrane; sequence WGES. Residues 242–263 form a helical membrane-spanning segment; sequence FQNSLFFATFLRYAVVLNATWL. A substrate-binding site is contributed by Trp-262. The Cytoplasmic segment spans residues 264–359; it reads VNSAAHMYGY…RTGEESYKSG (96 aa). The Fe cation site is built by His-269, His-298, His-301, and His-302. Positions 298–302 match the Histidine box-3 motif; that stretch reads HNYHH.

Belongs to the fatty acid desaturase type 1 family. Requires Fe(2+) as cofactor.

It localises to the endoplasmic reticulum membrane. The enzyme catalyses octadecanoyl-CoA + 2 Fe(II)-[cytochrome b5] + O2 + 2 H(+) = (9Z)-octadecenoyl-CoA + 2 Fe(III)-[cytochrome b5] + 2 H2O. In terms of biological role, stearoyl-CoA desaturase that utilizes O(2) and electrons from reduced cytochrome b5 to introduce the first double bond into saturated fatty acyl-CoA substrates. Catalyzes the insertion of a cis double bond at the delta-9 position into fatty acyl-CoA substrates including palmitoyl-CoA and stearoyl-CoA. Gives rise to a mixture of 16:1 and 18:1 unsaturated fatty acids. Plays an important role in lipid biosynthesis. Plays an important role in regulating the expression of genes that are involved in lipogenesis and in regulating mitochondrial fatty acid oxidation. Plays an important role in body energy homeostasis. Contributes to the biosynthesis of membrane phospholipids, cholesterol esters and triglycerides. This chain is Acyl-CoA desaturase (SCD), found in Ovis aries (Sheep).